The following is a 152-amino-acid chain: Endoribonuclease YbeY (152 aa).

Zn(2+) contacts are provided by His113, His117, and His123.

It belongs to the endoribonuclease YbeY family. Zn(2+) serves as cofactor.

The protein localises to the cytoplasm. Single strand-specific metallo-endoribonuclease involved in late-stage 70S ribosome quality control and in maturation of the 3' terminus of the 16S rRNA. The polypeptide is Endoribonuclease YbeY (Acidovorax sp. (strain JS42)).